A 143-amino-acid chain; its full sequence is Large ribosomal subunit protein uL11 (143 aa).

This sequence belongs to the universal ribosomal protein uL11 family. As to quaternary structure, part of the ribosomal stalk of the 50S ribosomal subunit. Interacts with L10 and the large rRNA to form the base of the stalk. L10 forms an elongated spine to which L12 dimers bind in a sequential fashion forming a multimeric L10(L12)X complex. Post-translationally, one or more lysine residues are methylated.

Its function is as follows. Forms part of the ribosomal stalk which helps the ribosome interact with GTP-bound translation factors. In Aromatoleum aromaticum (strain DSM 19018 / LMG 30748 / EbN1) (Azoarcus sp. (strain EbN1)), this protein is Large ribosomal subunit protein uL11.